Reading from the N-terminus, the 177-residue chain is Large ribosomal subunit protein uL6 (177 aa).

It belongs to the universal ribosomal protein uL6 family. As to quaternary structure, part of the 50S ribosomal subunit.

In terms of biological role, this protein binds to the 23S rRNA, and is important in its secondary structure. It is located near the subunit interface in the base of the L7/L12 stalk, and near the tRNA binding site of the peptidyltransferase center. The sequence is that of Large ribosomal subunit protein uL6 from Bartonella quintana (strain Toulouse) (Rochalimaea quintana).